We begin with the raw amino-acid sequence, 417 residues long: Probable uracil permease (417 aa).

The Cytoplasmic portion of the chain corresponds to 1-13 (MTNQNPPVLLEQN). The chain crosses the membrane as a helical span at residues 14 to 37 (HAKQAFVGLQMLFVAFGALVLVPL). At 38-41 (ITGL) the chain is on the periplasmic side. A helical transmembrane segment spans residues 42–61 (NANTALLTAGIGTLLFQLCT). Residues 62 to 64 (GRQ) lie on the Cytoplasmic side of the membrane. Residues 65–81 (VPIFLASSFAFIAPIQY) form a discontinuously helical membrane-spanning segment. Phe73 lines the uracil pocket. The Periplasmic segment spans residues 83-90 (VTTWGIAT). A helical transmembrane segment spans residues 91 to 111 (TMGGLVFTGLVYFALSTLVKI). At 112–123 (KGAGALQKVFPP) the chain is on the cytoplasmic side. The helical transmembrane segment at 124-145 (VVVGPVIIIIGMGLAPVAVDMA) threads the bilayer. Over 146 to 154 (LGKNSTYQY) the chain is Periplasmic. The helical transmembrane segment at 155 to 170 (NDAVFVSMATLLTTLG) threads the bilayer. The Cytoplasmic portion of the chain corresponds to 171-177 (VAVFAKG). The chain crosses the membrane as a helical span at residues 178 to 198 (MMKLIPIMFGIVVGYILCLFL). Over 199–223 (GLINFQPVIDAPWFSVPEITTPEFK) the chain is Periplasmic. The helical transmembrane segment at 224 to 247 (LEAILYLLPIAIAPAVEHVGGIMA) threads the bilayer. Glu240 is a binding site for uracil. The Cytoplasmic portion of the chain corresponds to 248–260 (ISSVTGKDFLQKP). A helical membrane pass occupies residues 261-280 (GLHRTLLGDGIATSAASFLG). Residues 281–297 (GPPNTTYAEVTGAVMLT) form a discontinuously helical membrane-spanning segment. Position 289 (Glu289) interacts with uracil. At 298–300 (RNF) the chain is on the cytoplasmic side. A helical membrane pass occupies residues 301 to 318 (NPKIMTWAAVWAIAISFC). Over 319–331 (GKVGAFLSTIPTI) the chain is Periplasmic. A helical transmembrane segment spans residues 332–353 (VMGGIMMLVFGSIAVVGMSTLI). The Cytoplasmic portion of the chain corresponds to 354–364 (RGKVDVTEARN). Residues 365 to 400 (LCIISVVMTFGIGGMFVNFGEVSLKGISLCAVVAIL) constitute an intramembrane region (discontinuously helical). At 401–416 (LNLILPKAKNTPIEEN) the chain is on the cytoplasmic side.

The protein belongs to the nucleobase:cation symporter-2 (NCS2) (TC 2.A.40) family.

Its subcellular location is the cell inner membrane. It carries out the reaction uracil(in) + H(+)(in) = uracil(out) + H(+)(out). Transport of uracil in the cell. The polypeptide is Probable uracil permease (uraA) (Pasteurella multocida (strain Pm70)).